We begin with the raw amino-acid sequence, 620 residues long: 1-deoxy-D-xylulose-5-phosphate synthase (620 aa).

Residues H80 and 121–123 (GHS) each bind thiamine diphosphate. D152 serves as a coordination point for Mg(2+). Residues 153–154 (GA), N181, Y288, and E370 each bind thiamine diphosphate. Position 181 (N181) interacts with Mg(2+).

The protein belongs to the transketolase family. DXPS subfamily. Homodimer. It depends on Mg(2+) as a cofactor. Thiamine diphosphate is required as a cofactor.

It catalyses the reaction D-glyceraldehyde 3-phosphate + pyruvate + H(+) = 1-deoxy-D-xylulose 5-phosphate + CO2. It participates in metabolic intermediate biosynthesis; 1-deoxy-D-xylulose 5-phosphate biosynthesis; 1-deoxy-D-xylulose 5-phosphate from D-glyceraldehyde 3-phosphate and pyruvate: step 1/1. Its function is as follows. Catalyzes the acyloin condensation reaction between C atoms 2 and 3 of pyruvate and glyceraldehyde 3-phosphate to yield 1-deoxy-D-xylulose-5-phosphate (DXP). In Photobacterium profundum (strain SS9), this protein is 1-deoxy-D-xylulose-5-phosphate synthase.